A 181-amino-acid chain; its full sequence is dTTP/UTP pyrophosphatase (181 aa).

Aspartate 67 serves as the catalytic Proton acceptor.

The protein belongs to the Maf family. YhdE subfamily. A divalent metal cation serves as cofactor.

It is found in the cytoplasm. The catalysed reaction is dTTP + H2O = dTMP + diphosphate + H(+). It catalyses the reaction UTP + H2O = UMP + diphosphate + H(+). Functionally, nucleoside triphosphate pyrophosphatase that hydrolyzes dTTP and UTP. May have a dual role in cell division arrest and in preventing the incorporation of modified nucleotides into cellular nucleic acids. The sequence is that of dTTP/UTP pyrophosphatase from Latilactobacillus sakei subsp. sakei (strain 23K) (Lactobacillus sakei subsp. sakei).